Here is a 213-residue protein sequence, read N- to C-terminus: Glycerol-3-phosphate acyltransferase (213 aa).

5 consecutive transmembrane segments (helical) span residues 3-23, 68-88, 112-132, 134-154, and 163-183; these read LLLF…LWIG, ILLP…GFFA, VLLG…VLVL, LFSM…LSVL, and LPNY…IIII.

The protein belongs to the PlsY family. Probably interacts with PlsX.

Its subcellular location is the cell membrane. The enzyme catalyses an acyl phosphate + sn-glycerol 3-phosphate = a 1-acyl-sn-glycero-3-phosphate + phosphate. It functions in the pathway lipid metabolism; phospholipid metabolism. In terms of biological role, catalyzes the transfer of an acyl group from acyl-phosphate (acyl-PO(4)) to glycerol-3-phosphate (G3P) to form lysophosphatidic acid (LPA). This enzyme utilizes acyl-phosphate as fatty acyl donor, but not acyl-CoA or acyl-ACP. The sequence is that of Glycerol-3-phosphate acyltransferase from Streptococcus pyogenes serotype M28 (strain MGAS6180).